Reading from the N-terminus, the 189-residue chain is Putative manganese efflux pump MntP (189 aa).

Helical transmembrane passes span 3–23, 41–61, 65–85, 104–124, 132–152, and 165–185; these read LSAT…ASIG, LIFG…GLFA, ILEW…CRMI, FWVL…IGVG, IVHT…LGML, and AEII…YEHI.

This sequence belongs to the MntP (TC 9.B.29) family.

It localises to the cell inner membrane. Functionally, probably functions as a manganese efflux pump. This is Putative manganese efflux pump MntP from Yersinia enterocolitica serotype O:8 / biotype 1B (strain NCTC 13174 / 8081).